Reading from the N-terminus, the 350-residue chain is Erythronate-4-phosphate dehydrogenase (350 aa).

The substrate site is built by Ser45 and Thr66. Residues 124-125, Asp144, 203-205, and Asp226 each bind NAD(+); these read QV and ASR. Arg205 is a catalytic residue. Residue Glu231 is part of the active site. The Proton donor role is filled by His248. An NAD(+)-binding site is contributed by Gly251.

It belongs to the D-isomer specific 2-hydroxyacid dehydrogenase family. PdxB subfamily. As to quaternary structure, homodimer.

It is found in the cytoplasm. The enzyme catalyses 4-phospho-D-erythronate + NAD(+) = (R)-3-hydroxy-2-oxo-4-phosphooxybutanoate + NADH + H(+). Its pathway is cofactor biosynthesis; pyridoxine 5'-phosphate biosynthesis; pyridoxine 5'-phosphate from D-erythrose 4-phosphate: step 2/5. Functionally, catalyzes the oxidation of erythronate-4-phosphate to 3-hydroxy-2-oxo-4-phosphonooxybutanoate. The protein is Erythronate-4-phosphate dehydrogenase of Legionella pneumophila subsp. pneumophila (strain Philadelphia 1 / ATCC 33152 / DSM 7513).